Reading from the N-terminus, the 378-residue chain is Putative aminoglycoside phosphotransferase (378 aa).

ATP-binding positions include Arg79 and 134–136 (DYV). Asp249 acts as the Proton acceptor in catalysis. 3 residues coordinate Mg(2+): Asn254, Asp267, and Glu269.

It belongs to the aminoglycoside phosphotransferase family.

In terms of biological role, might catalyze the phosphorylation of aminoglycosides and confer aminoglycoside antibiotics resistance. The sequence is that of Putative aminoglycoside phosphotransferase from Mycobacterium tuberculosis (strain CDC 1551 / Oshkosh).